Here is a 198-residue protein sequence, read N- to C-terminus: FMN-dependent NADH:quinone oxidoreductase (198 aa).

92-95 serves as a coordination point for FMN; that stretch reads MWNL.

The protein belongs to the azoreductase type 1 family. Homodimer. The cofactor is FMN.

The enzyme catalyses 2 a quinone + NADH + H(+) = 2 a 1,4-benzosemiquinone + NAD(+). It carries out the reaction N,N-dimethyl-1,4-phenylenediamine + anthranilate + 2 NAD(+) = 2-(4-dimethylaminophenyl)diazenylbenzoate + 2 NADH + 2 H(+). Quinone reductase that provides resistance to thiol-specific stress caused by electrophilic quinones. Its function is as follows. Also exhibits azoreductase activity. Catalyzes the reductive cleavage of the azo bond in aromatic azo compounds to the corresponding amines. This Clostridium beijerinckii (strain ATCC 51743 / NCIMB 8052) (Clostridium acetobutylicum) protein is FMN-dependent NADH:quinone oxidoreductase.